The sequence spans 256 residues: Protein CUSTOS (256 aa).

The segment covering 1–19 has biased composition (low complexity); that stretch reads MVAPSGAMSDSENSSSSSS. Disordered stretches follow at residues 1–83, 127–163, and 227–256; these read MVAP…TPEF, FTSI…QRCR, and IQKK…KPEN. Ser62 carries the phosphoserine modification. The span at 63–83 shows a compositional bias: basic and acidic residues; the sequence is RRHEVNQHEEDGNDLRTTPEF. Thr80 carries the phosphothreonine modification. Position 139 is a phosphoserine (Ser139). Positions 228–235 match the Nucleolar localization signal (NLS) motif; that stretch reads QKKRKKKA. The segment covering 228–237 has biased composition (basic residues); the sequence is QKKRKKKAKK. A compositionally biased stretch (low complexity) spans 246-256; that stretch reads PAECAAAKPEN.

It belongs to the CUSTOS family.

The protein resides in the nucleus envelope. In terms of biological role, plays a role in the regulation of Wnt signaling pathway during early development. The chain is Protein CUSTOS from Mus musculus (Mouse).